The following is a 55-amino-acid chain: DNA-binding protein (55 aa).

Positions 1 to 55 (MVYRRRRRSSTGTTYGSTRRRRSSGYRRRPGRPRTYRRSRSRSSTGRRSYRTRYY) are disordered. 2 consecutive repeat copies span residues 5–10 (RRRRSS) and 19–24 (RRRRSS). The interval 5–24 (RRRRSSTGTTYGSTRRRRSS) is 2 X 6 AA repeats of R-R-R-R-S-S. Positions 18-41 (TRRRRSSGYRRRPGRPRTYRRSRS) are enriched in basic residues.

As to quaternary structure, interacts with protein AC132. In terms of processing, phosphorylated.

The protein localises to the virion. The protein resides in the host cytoplasm. Functionally, plays a role in viral DNA packaging and nucleocapsid assembly. Promotes viral gene transcription during the late stage of infection while it is non-essential for the basal level of viral gene transcription. The chain is DNA-binding protein (P6.9) from Lepidoptera (butterflies and moths).